The following is a 566-amino-acid chain: Arginine--tRNA ligase (566 aa).

Positions 123–133 (PNIAKPFHIGH) match the 'HIGH' region motif.

Belongs to the class-I aminoacyl-tRNA synthetase family. As to quaternary structure, monomer.

The protein resides in the cytoplasm. The enzyme catalyses tRNA(Arg) + L-arginine + ATP = L-arginyl-tRNA(Arg) + AMP + diphosphate. The chain is Arginine--tRNA ligase from Halothermothrix orenii (strain H 168 / OCM 544 / DSM 9562).